The sequence spans 89 residues: MSVAEIKKSDVVAQFARGANDTGSPEVQVALLTTRINELTVHFKAHTKDHHSRRGLLRMVSRRRKLLDYLKGKDADRYRALIEKLGLRK.

It belongs to the universal ribosomal protein uS15 family. Part of the 30S ribosomal subunit. Forms a bridge to the 50S subunit in the 70S ribosome, contacting the 23S rRNA.

One of the primary rRNA binding proteins, it binds directly to 16S rRNA where it helps nucleate assembly of the platform of the 30S subunit by binding and bridging several RNA helices of the 16S rRNA. Its function is as follows. Forms an intersubunit bridge (bridge B4) with the 23S rRNA of the 50S subunit in the ribosome. The polypeptide is Small ribosomal subunit protein uS15 (Paraburkholderia phymatum (strain DSM 17167 / CIP 108236 / LMG 21445 / STM815) (Burkholderia phymatum)).